The sequence spans 659 residues: Zinc finger protein 304 (659 aa).

In terms of domain architecture, KRAB spans 14–88 (VTFEDVFVYF…TAESGLFQKA (75 aa)). C2H2-type zinc fingers lie at residues 89-111 (HPCEMCDPLLKDILHLAEHQGSH), 115-139 (KLCTRGLCRRRFSFSANFYQHQKQH), 251-273 (FRCLPCGNVFKEKSALINHRKIH), 279-301 (HVCKECGKAFIHLHHLKMHQKFH), 307-329 (YTCSECGKAFSRKDTLVQHQRVH), 335-357 (YDCSECGKAYSRSSHLVQHQRIH), 363-385 (YKCNKCGKAFSRKDTLVQHQRFH), 391-413 (YECSECGKFFSQSSHLIEHWRIH), 419-441 (YECIECGKFFSHNSSLIKHRRVH), 447-469 (YVCSKCGKAFGCKDTLVQHQIIH), 475-497 (YECSECGKAFSRKDTLVQHQKIH), 503-525 (YECGECGKFFSHSSNLIVHQRIH), 531-553 (YECNECGKCFSHNSSLILHQRVH), 559-581 (YVCSECGKAYISSSHLVQHKKVH), 587-609 (YECSECGKFFSRNSGLILHQRVH), and 615-637 (YVCSECGKAYSRSSHLVRHQKAH).

This sequence belongs to the krueppel C2H2-type zinc-finger protein family. As to quaternary structure, probably part of a corepressor complex containing ZNF304, TRIM28, SETDB1 and DNMT1; leading to promoter hypermethylation and transcriptional silencing. Probably associates with Polycomb group (PcG) complexes; leading to trimethylation of 'Lys-27' of histone H3 (H3K27me3). Interacts with USP28. Deubiquitinated by USP28; the deubiquitination leads to the stabilization of ZNF304 from proteolytic degradation. Expressed in undifferentiated embryonic stem cells (ESCs). Expressed strongly in colorectal cancers cells (CRCs). Expressed strongly in ovarian carcinoma (OC) tumor cell lines compared to non-transformed ovarian epithelial cells (at protein level). Expressed in lymphoid tissues, thyroid, adrenal gland, prostate, pancreas and skeletal muscles.

The protein resides in the nucleus. In terms of biological role, acts as a transcriptional regulator and plays a role in gene silencing. Probably forms a corepressor complex required for activated KRAS-mediated promoter hypermethylation and transcriptional silencing of several tumor suppressor genes (TSGs) or other tumor-related genes in colorectal cancer (CRC) cells. Also required to maintain a transcriptionally repressive state of genes in undifferentiated embryonic stem cells (ESCs) by inducing trimethylation of 'Lys-27' of histone H3 (H3K27me3) in a Polycomb group (PcG) complexes-dependent manner. Associates at promoter regions of TSGs and mediates the recruitment of the corepressor complex containing the scaffolding protein TRIM28, methyltransferase DNMT1 and histone methyltransferase SETDB1 and/or the PcG complexes at those sites. Transcription factor involved in the metastatic cascade process by inducing cell migration and proliferation and gain resistance to anoikis of ovarian carcinoma (OC) cells via integrin-mediated signaling pathways. Associates with the ITGB1 promoter and positively regulates beta-1 integrin transcription expression. Promotes angiogenesis. Promotes tumor growth. The sequence is that of Zinc finger protein 304 from Homo sapiens (Human).